The sequence spans 491 residues: Aspartyl/glutamyl-tRNA(Asn/Gln) amidotransferase subunit B (491 aa).

The protein belongs to the GatB/GatE family. GatB subfamily. Heterotrimer of A, B and C subunits.

It carries out the reaction L-glutamyl-tRNA(Gln) + L-glutamine + ATP + H2O = L-glutaminyl-tRNA(Gln) + L-glutamate + ADP + phosphate + H(+). The catalysed reaction is L-aspartyl-tRNA(Asn) + L-glutamine + ATP + H2O = L-asparaginyl-tRNA(Asn) + L-glutamate + ADP + phosphate + 2 H(+). Allows the formation of correctly charged Asn-tRNA(Asn) or Gln-tRNA(Gln) through the transamidation of misacylated Asp-tRNA(Asn) or Glu-tRNA(Gln) in organisms which lack either or both of asparaginyl-tRNA or glutaminyl-tRNA synthetases. The reaction takes place in the presence of glutamine and ATP through an activated phospho-Asp-tRNA(Asn) or phospho-Glu-tRNA(Gln). This Burkholderia ambifaria (strain ATCC BAA-244 / DSM 16087 / CCUG 44356 / LMG 19182 / AMMD) (Burkholderia cepacia (strain AMMD)) protein is Aspartyl/glutamyl-tRNA(Asn/Gln) amidotransferase subunit B.